A 293-amino-acid polypeptide reads, in one-letter code: Putative DNA glycosylase At3g47830 (293 aa).

Residues Met-1–Leu-10 show a composition bias toward basic residues. The segment at Met-1–Thr-34 is disordered. Positions 108 and 151 each coordinate DNA. Lys-196 functions as the Schiff-base intermediate with DNA in the catalytic mechanism. Residues His-216 and Asp-232 each coordinate DNA.

Belongs to the DNA glycosylase family.

This is Putative DNA glycosylase At3g47830 from Arabidopsis thaliana (Mouse-ear cress).